Consider the following 290-residue polypeptide: 3-hydroxyacyl-thioester dehydratase Y (290 aa).

The segment at 147–169 (FGGARGERPAAPEFPDRHPDARI) is disordered. Residues 151–169 (RGERPAAPEFPDRHPDARI) show a composition bias toward basic and acidic residues. Residues 161–271 (PDRHPDARID…AVFRTEVAGS (111 aa)) enclose the MaoC-like domain.

It belongs to the enoyl-CoA hydratase/isomerase family.

It carries out the reaction a (3R)-3-hydroxyacyl-CoA = a (2E)-enoyl-CoA + H2O. The enzyme catalyses (3R)-hydroxyhexanoyl-CoA = (2E)-hexenoyl-CoA + H2O. The catalysed reaction is (2E)-octenoyl-CoA + H2O = (3R)-hydroxyoctanoyl-CoA. It catalyses the reaction (3R)-3-hydroxydecanoyl-CoA = (2E)-decenoyl-CoA + H2O. It carries out the reaction (3R)-3-hydroxydodecanoyl-CoA = (2E)-dodecenoyl-CoA + H2O. The enzyme catalyses (3R)-hydroxyhexadecanoyl-CoA = (2E)-hexadecenoyl-CoA + H2O. Shows trans-enoyl-CoA hydratase/3-hydroxyacyl-CoA dehydratase activity. In vitro, can hydrate various enoyl-CoA such as (2E)-hexenoyl-CoA, (2E)-octenoyl-CoA, (2E)-decenoyl-CoA, (2E)-dodecenoyl-CoA and (2E)-hexadecenoyl-CoA. May contribute to the persistence of the tuberculosis infection by inducing COX-2 expression in macrophages through MAPK-NF-kappaB signaling pathway. This Mycobacterium tuberculosis (strain ATCC 25618 / H37Rv) protein is 3-hydroxyacyl-thioester dehydratase Y.